We begin with the raw amino-acid sequence, 141 residues long: Large ribosomal subunit protein uL11 (141 aa).

The protein belongs to the universal ribosomal protein uL11 family. In terms of assembly, part of the ribosomal stalk of the 50S ribosomal subunit. Interacts with L10 and the large rRNA to form the base of the stalk. L10 forms an elongated spine to which L12 dimers bind in a sequential fashion forming a multimeric L10(L12)X complex. One or more lysine residues are methylated.

Forms part of the ribosomal stalk which helps the ribosome interact with GTP-bound translation factors. The chain is Large ribosomal subunit protein uL11 from Petrotoga mobilis (strain DSM 10674 / SJ95).